A 513-amino-acid polypeptide reads, in one-letter code: Putative ribose/galactose/methyl galactoside import ATP-binding protein 2 (513 aa).

ABC transporter domains are found at residues 24 to 260 and 270 to 510; these read LTAE…VGRE and VPIG…VMEL. Residue 56 to 63 coordinates ATP; the sequence is GENGAGKS.

It belongs to the ABC transporter superfamily. Carbohydrate importer 2 (CUT2) (TC 3.A.1.2) family.

The protein resides in the cell inner membrane. It carries out the reaction D-ribose(out) + ATP + H2O = D-ribose(in) + ADP + phosphate + H(+). The enzyme catalyses D-galactose(out) + ATP + H2O = D-galactose(in) + ADP + phosphate + H(+). Part of an ABC transporter complex involved in carbohydrate import. Could be involved in ribose, galactose and/or methyl galactoside import. Responsible for energy coupling to the transport system. The sequence is that of Putative ribose/galactose/methyl galactoside import ATP-binding protein 2 from Rhizobium meliloti (strain 1021) (Ensifer meliloti).